We begin with the raw amino-acid sequence, 312 residues long: Fe-S cluster assembly protein DRE2 (312 aa).

The interval 7–139 (LSDVPRVLLL…VKPVFEEQSV (133 aa)) is N-terminal SAM-like domain. Residues 140–204 (LLPFSINRSQ…EDELINEDEL (65 aa)) are linker. Cys-214, Cys-225, Cys-228, and Cys-230 together coordinate [2Fe-2S] cluster. The tract at residues 214 to 230 (CRPKAGKRRRACKDCTC) is fe-S binding site A. [4Fe-4S] cluster is bound by residues Cys-275, Cys-278, Cys-286, and Cys-289. 2 short sequence motifs (cx2C motif) span residues 275–278 (CGNC) and 286–289 (CDGC). Residues 275–289 (CGNCSLGDAFRCDGC) form a fe-S binding site B region.

It belongs to the anamorsin family. As to quaternary structure, monomer. Interacts with TAH18. Interacts with MIA40. Requires [2Fe-2S] cluster as cofactor. [4Fe-4S] cluster serves as cofactor.

The protein localises to the cytoplasm. It localises to the mitochondrion intermembrane space. Component of the cytosolic iron-sulfur (Fe-S) protein assembly (CIA) machinery required for the maturation of extramitochondrial Fe-S proteins. Part of an electron transfer chain functioning in an early step of cytosolic Fe-S biogenesis, facilitating the de novo assembly of a [4Fe-4S] cluster on the scaffold complex CFD1-NBP35. Electrons are transferred to DRE2 from NADPH via the FAD- and FMN-containing protein TAH18. TAH18-DRE2 are also required for the assembly of the diferric tyrosyl radical cofactor of ribonucleotide reductase (RNR), probably by providing electrons for reduction during radical cofactor maturation in the catalytic small subunit RNR2. This Arthroderma otae (strain ATCC MYA-4605 / CBS 113480) (Microsporum canis) protein is Fe-S cluster assembly protein DRE2.